Here is a 1480-residue protein sequence, read N- to C-terminus: Cystic fibrosis transmembrane conductance regulator (1480 aa).

Over 1–77 the chain is Cytoplasmic; that stretch reads MQRSPLEKAS…KLINALRRCF (77 aa). The helical transmembrane segment at 78–98 threads the bilayer; sequence FWRFMFYGIFLYLGEVTKAVQ. Residues 81 to 365 form the ABC transmembrane type-1 1 domain; sequence FMFYGIFLYL…WAVQTWYDSL (285 aa). The Extracellular portion of the chain corresponds to 99–122; it reads PLLLGRIIASYDPDNKEERSIAIY. A helical membrane pass occupies residues 123-146; sequence LGIGLCLLFIVRTLLLHPAIFGLH. Over 147 to 195 the chain is Cytoplasmic; that stretch reads HIGMQMRIAMFSLIYKKTLKLSSRVLDKISIGQLVSLLSNNLNKFDEGL. Residues 196-216 form a helical membrane-spanning segment; the sequence is ALAHFVWIAPLQVALLMGLIW. Residues 217–222 are Extracellular-facing; sequence ELLQAS. Residues 223-243 form a helical membrane-spanning segment; that stretch reads AFCGLGFLIVLALFQAGLGRM. Over 244–298 the chain is Cytoplasmic; it reads MMKYRDQRAGKISERLVITSEMIENIQSVKAYCWEEAMEKMIENLRQTELKLTRK. The helical transmembrane segment at 299–319 threads the bilayer; that stretch reads AAYVRYFNSSAFFFSGFFVVF. Residues 320–339 are Extracellular-facing; the sequence is LSVLPYALIKGIILRKIFTT. The helical transmembrane segment at 340–358 threads the bilayer; sequence ISFCIVLRMAVTRQFPWAV. The Cytoplasmic portion of the chain corresponds to 359–858; sequence QTWYDSLGAI…YLRYITVHKS (500 aa). ATP contacts are provided by residues tryptophan 401, serine 434, 458–465, and glutamine 493; that span reads GSTGAGKT. The ABC transporter 1 domain occupies 423-646; the sequence is NGDDSLFFSN…RPDFSSKLMG (224 aa). A lipid anchor (S-palmitoyl cysteine) is attached at cysteine 524. A phosphoserine mark is found at serine 549 and serine 660. The disordered R region stretch occupies residues 654–831; it reads SAERRNSILT…EEINEEDLKE (178 aa). Phosphoserine; by PKA is present on serine 670. At serine 686 the chain carries Phosphoserine. Lysine 688 participates in a covalent cross-link: Glycyl lysine isopeptide (Lys-Gly) (interchain with G-Cter in ubiquitin). Residues serine 700 and serine 712 each carry the phosphoserine modification. Threonine 717 is modified (phosphothreonine). Serine 737, serine 753, serine 768, serine 790, serine 795, and serine 813 each carry phosphoserine. A helical transmembrane segment spans residues 859–879; the sequence is LIFVLIWCLVIFLAEVAASLV. The ABC transmembrane type-1 2 domain maps to 859–1155; it reads LIFVLIWCLV…AVNSSIDVDS (297 aa). Topologically, residues 880–918 are extracellular; it reads VLWLLGNTPLQDKGNSTHSRNNSYAVIITSTSSYYVFYI. N-linked (GlcNAc...) asparagine glycans are attached at residues asparagine 894 and asparagine 900. The discontinuously helical transmembrane segment at 919-939 threads the bilayer; the sequence is YVGVADTLLAMGFFRGLPLVH. Residues 940-990 lie on the Cytoplasmic side of the membrane; sequence TLITVSKILHHKMLHSVLQAPMSTLNTLKAGGILNRFSKDIAILDDLLPLT. A helical transmembrane segment spans residues 991 to 1011; the sequence is IFDFIQLLLIVIGAIAVVAVL. The Extracellular portion of the chain corresponds to 1012–1013; that stretch reads QP. A helical membrane pass occupies residues 1014–1034; the sequence is YIFVATVPVIVAFIMLRAYFL. At 1035-1095 the chain is on the cytoplasmic side; that stretch reads QTSQQLKQLE…TANWFLYLST (61 aa). A helical transmembrane segment spans residues 1096-1116; the sequence is LRWFQMRIEMIFVIFFIAVTF. The Extracellular segment spans residues 1117-1130; it reads ISILTTGEGEGRVG. The chain crosses the membrane as a helical span at residues 1131 to 1151; that stretch reads IILTLAMNIMSTLQWAVNSSI. Residues 1152–1480 are Cytoplasmic-facing; it reads DVDSLMRSVS…TEEEVQDTRL (329 aa). Positions 1210–1443 constitute an ABC transporter 2 domain; the sequence is MTVKDLTAKY…RSLFRQAISP (234 aa). Residues tyrosine 1219 and 1244 to 1251 each bind ATP; that span reads GRTGSGKS. The tract at residues 1386-1480 is interaction with GORASP2; it reads RTLKQAFADC…TEEEVQDTRL (95 aa). The S-palmitoyl cysteine moiety is linked to residue cysteine 1395. Residues serine 1444 and serine 1456 each carry the phosphoserine modification. The interval 1452 to 1480 is disordered; that stretch reads HRNSSKCKSKPQIAALKEETEEEVQDTRL. A compositionally biased stretch (acidic residues) spans 1470–1480; the sequence is ETEEEVQDTRL. The PDZ-binding signature appears at 1478–1480; it reads TRL.

The protein belongs to the ABC transporter superfamily. ABCC family. CFTR transporter (TC 3.A.1.202) subfamily. In terms of assembly, monomer; does not require oligomerization for channel activity. May form oligomers in the membrane. Interacts with SLC26A3, SLC26A6 and NHERF1. Interacts with SHANK2. Interacts with MYO6. Interacts (via C-terminus) with GOPC (via PDZ domain); this promotes CFTR internalization and thereby decreases channel activity. Interacts with SLC4A7 through NHERF1. Found in a complex with MYO5B and RAB11A. Interacts with ANO1. Interacts with SLC26A8. Interacts with AHCYL1; the interaction increases CFTR activity. Interacts with CSE1L. The core-glycosylated form interacts with GORASP2 (via PDZ GRASP-type 1 domain) in respone to ER stress. Interacts with MARCHF2; the interaction leads to CFTR ubiqtuitination and degradation. Interacts with ADGRG2. In terms of processing, N-glycosylated. Phosphorylated; cAMP treatment promotes phosphorylation and activates the channel. Dephosphorylation decreases the ATPase activity (in vitro). Phosphorylation at PKA sites activates the channel. Phosphorylation at PKC sites enhances the response to phosphorylation by PKA. Phosphorylated by AMPK; this inhibits channel activity. Post-translationally, ubiquitinated, leading to its degradation in the lysosome. Deubiquitination by USP10 in early endosomes enhances its endocytic recycling to the cell membrane. Ubiquitinated by RNF185 during ER stress. Ubiquitinated by MARCHF2.

Its subcellular location is the apical cell membrane. It is found in the early endosome membrane. It localises to the cell membrane. The protein resides in the recycling endosome membrane. The protein localises to the endoplasmic reticulum membrane. Its subcellular location is the nucleus. The catalysed reaction is ATP + H2O + closed Cl(-) channel = ADP + phosphate + open Cl(-) channel.. The enzyme catalyses chloride(in) = chloride(out). It carries out the reaction hydrogencarbonate(in) = hydrogencarbonate(out). It catalyses the reaction ATP + H2O = ADP + phosphate + H(+). Epithelial ion channel that plays an important role in the regulation of epithelial ion and water transport and fluid homeostasis. Mediates the transport of chloride ions across the cell membrane. Possesses an intrinsic ATPase activity and utilizes ATP to gate its channel; the passive flow of anions through the channel is gated by cycles of ATP binding and hydrolysis by the ATP-binding domains. The ion channel is also permeable to HCO(3)(-); selectivity depends on the extracellular chloride concentration. Exerts its function also by modulating the activity of other ion channels and transporters. Contributes to the regulation of the pH and the ion content of the epithelial fluid layer. Modulates the activity of the epithelial sodium channel (ENaC) complex, in part by regulating the cell surface expression of the ENaC complex. May regulate bicarbonate secretion and salvage in epithelial cells by regulating the transporter SLC4A7. Can inhibit the chloride channel activity of ANO1. Plays a role in the chloride and bicarbonate homeostasis during sperm epididymal maturation and capacitation. The protein is Cystic fibrosis transmembrane conductance regulator of Pan troglodytes (Chimpanzee).